The sequence spans 166 residues: Lactose-binding lectin l-2 (166 aa).

The first 24 residues, 1–24, serve as a signal peptide directing secretion; it reads MVSFKLPAFLCVAVLSSMALVSHG. Cystine bridges form between Cys-34–Cys-45, Cys-62–Cys-160, and Cys-136–Cys-152. In terms of domain architecture, C-type lectin spans 41–161; sequence HKNRCYLHVA…CDLLFPSICV (121 aa).

As to quaternary structure, homodimer; disulfide-linked. In terms of tissue distribution, skin; contained within club cells which are a component of the epidermis in combination with epithelial cells and mucus cells (at protein level).

The protein localises to the secreted. In terms of biological role, involved in host defense at the body surface. Causes agglutination and suppresses the growth of the Gram-negative bacterium E.coli K12. Possesses calcium-independent hemagglutinating activity. This is Lactose-binding lectin l-2 from Anguilla japonica (Japanese eel).